Reading from the N-terminus, the 39-residue chain is Photosystem II reaction center protein J (39 aa).

A helical membrane pass occupies residues 7–27; sequence IPLWIVAVVAGLGVITVVGLF.

Belongs to the PsbJ family. PSII is composed of 1 copy each of membrane proteins PsbA, PsbB, PsbC, PsbD, PsbE, PsbF, PsbH, PsbI, PsbJ, PsbK, PsbL, PsbM, PsbT, PsbX, PsbY, PsbZ, Psb30/Ycf12, peripheral proteins PsbO, CyanoQ (PsbQ), PsbU, PsbV and a large number of cofactors. It forms dimeric complexes.

The protein localises to the cellular thylakoid membrane. Its function is as follows. One of the components of the core complex of photosystem II (PSII). PSII is a light-driven water:plastoquinone oxidoreductase that uses light energy to abstract electrons from H(2)O, generating O(2) and a proton gradient subsequently used for ATP formation. It consists of a core antenna complex that captures photons, and an electron transfer chain that converts photonic excitation into a charge separation. The sequence is that of Photosystem II reaction center protein J from Synechococcus sp. (strain JA-2-3B'a(2-13)) (Cyanobacteria bacterium Yellowstone B-Prime).